A 595-amino-acid chain; its full sequence is Trafficking protein particle complex subunit 14 (595 aa).

2 disordered regions span residues 84-111 and 494-513; these read ASVS…ECVE and SNPP…SSPA.

In terms of assembly, component of the multisubunit TRAPP II complex, which includes at least TRAPPC1, TRAPPC2, TRAPPC2L, TRAPPC3, TRAPPC4, TRAPPC5, TRAPPC6A/B, TRAPPC9, TRAPPC10 and TRAPPC14. TRAPPC9, TRAPPC10 and TRAPPC14 are specific subunits of the TRAPP II complex. Interacts with alpha-tubulin during mitosis.

It localises to the cytoplasm. The protein resides in the cytoskeleton. Its subcellular location is the spindle. It is found in the vesicle. The protein localises to the midbody. Functionally, specific subunit of the TRAPP (transport protein particle) II complex, a highly conserved vesicle tethering complex that functions in late Golgi trafficking as a membrane tether. TRAPP II complex also has GEF activity toward RAB1A. TRAPPC14 is required for ciliogenesis. In Danio rerio (Zebrafish), this protein is Trafficking protein particle complex subunit 14 (trappc14).